Reading from the N-terminus, the 150-residue chain is Ribonuclease K6 (150 aa).

The signal sequence occupies residues 1 to 23 (MVLCFPLLLLLLVLWGPVCLLHA). Residue His38 is the Proton acceptor of the active site. 4 disulfides stabilise this stretch: Cys46–Cys104, Cys60–Cys114, Cys78–Cys129, and Cys85–Cys92. Asn55 is a glycosylation site (N-linked (GlcNAc...) asparagine). Residues 61–65 (KHQNT) and Lys86 each bind substrate. An N-linked (GlcNAc...) asparagine glycan is attached at Asn100. A substrate-binding site is contributed by Arg105. His145 acts as the Proton donor in catalysis.

This sequence belongs to the pancreatic ribonuclease family. As to quaternary structure, interacts (via N-terminus) with bacterial lipopolysaccharide (LPS).

It is found in the secreted. The protein localises to the lysosome. It localises to the cytoplasmic granule. Its function is as follows. Ribonuclease which shows a preference for the pyrimidines uridine and cytosine. Has potent antibacterial activity against a range of Gram-positive and Gram-negative bacteria, including P.aeruginosa, A.baumanii, M.luteus, S.aureus, E.faecalis, E.faecium, S.saprophyticus and E.coli. Causes loss of bacterial membrane integrity, and also promotes agglutination of Gram-negative bacteria. Probably contributes to urinary tract sterility. Bactericidal activity is independent of RNase activity. The sequence is that of Ribonuclease K6 (RNASE6) from Papio hamadryas (Hamadryas baboon).